The chain runs to 321 residues: Queuosine 5'-phosphate N-glycosylase/hydrolase (321 aa).

Residues Phe-227, Asp-229, and Asp-296 each contribute to the queuine site. Asp-229 serves as the catalytic Nucleophile or transition state stabilizer.

It belongs to the QNG1 protein family.

The enzyme catalyses queuosine 5'-phosphate + H2O = queuine + D-ribose 5-phosphate. In terms of biological role, catalyzes the hydrolysis of queuosine 5'-phosphate, releasing the nucleobase queuine (q). Is required for salvage of queuine from exogenous queuosine (Q) that is imported and then converted to queuosine 5'-phosphate intracellularly. The protein is Queuosine 5'-phosphate N-glycosylase/hydrolase of Dictyostelium discoideum (Social amoeba).